A 193-amino-acid polypeptide reads, in one-letter code: Segregation and condensation protein B (193 aa).

It belongs to the ScpB family. As to quaternary structure, homodimer. Homodimerization may be required to stabilize the binding of ScpA to the Smc head domains. Component of a cohesin-like complex composed of ScpA, ScpB and the Smc homodimer, in which ScpA and ScpB bind to the head domain of Smc. The presence of the three proteins is required for the association of the complex with DNA.

It is found in the cytoplasm. Its function is as follows. Participates in chromosomal partition during cell division. May act via the formation of a condensin-like complex containing Smc and ScpA that pull DNA away from mid-cell into both cell halves. The sequence is that of Segregation and condensation protein B from Streptococcus thermophilus (strain CNRZ 1066).